The following is a 572-amino-acid chain: Phosphoenolpyruvate-protein phosphotransferase (572 aa).

His-191 functions as the Tele-phosphohistidine intermediate in the catalytic mechanism. 2 residues coordinate phosphoenolpyruvate: Arg-298 and Arg-334. The Mg(2+) site is built by Glu-433 and Asp-457. Residues 456 to 457 (ND) and Arg-467 contribute to the phosphoenolpyruvate site. Residue Cys-504 is the Proton donor of the active site.

Belongs to the PEP-utilizing enzyme family. As to quaternary structure, homodimer. The cofactor is Mg(2+).

It localises to the cytoplasm. The enzyme catalyses L-histidyl-[protein] + phosphoenolpyruvate = N(pros)-phospho-L-histidyl-[protein] + pyruvate. Its function is as follows. General (non sugar-specific) component of the phosphoenolpyruvate-dependent sugar phosphotransferase system (sugar PTS). This major carbohydrate active-transport system catalyzes the phosphorylation of incoming sugar substrates concomitantly with their translocation across the cell membrane. Enzyme I transfers the phosphoryl group from phosphoenolpyruvate (PEP) to the phosphoryl carrier protein (HPr). This chain is Phosphoenolpyruvate-protein phosphotransferase, found in Staphylococcus aureus (strain MSSA476).